The chain runs to 81 residues: Photosystem I iron-sulfur center (81 aa).

2 4Fe-4S ferredoxin-type domains span residues V2–W31 and I39–Y68. Positions 11, 14, 17, 21, 48, 51, 54, and 58 each coordinate [4Fe-4S] cluster.

As to quaternary structure, the eukaryotic PSI reaction center is composed of at least 11 subunits. Requires [4Fe-4S] cluster as cofactor.

It is found in the plastid. Its subcellular location is the chloroplast thylakoid membrane. It catalyses the reaction reduced [plastocyanin] + hnu + oxidized [2Fe-2S]-[ferredoxin] = oxidized [plastocyanin] + reduced [2Fe-2S]-[ferredoxin]. Functionally, apoprotein for the two 4Fe-4S centers FA and FB of photosystem I (PSI); essential for photochemical activity. FB is the terminal electron acceptor of PSI, donating electrons to ferredoxin. The C-terminus interacts with PsaA/B/D and helps assemble the protein into the PSI complex. Required for binding of PsaD and PsaE to PSI. PSI is a plastocyanin/cytochrome c6-ferredoxin oxidoreductase, converting photonic excitation into a charge separation, which transfers an electron from the donor P700 chlorophyll pair to the spectroscopically characterized acceptors A0, A1, FX, FA and FB in turn. This is Photosystem I iron-sulfur center from Cyanidium caldarium (Red alga).